Consider the following 218-residue polypeptide: NADH-ubiquinone oxidoreductase 21 kDa subunit, mitochondrial (218 aa).

Residues 1 to 33 (MSALRITTASAARMLRTSNAMMPSVMGAAQRRA) constitute a mitochondrion transit peptide. A disordered region spans residues 31 to 74 (RRALSDSAEPARVPSVESARVPEKLAKEDSPLATPKRNSPDYNV). Positions 50–60 (RVPEKLAKEDS) are enriched in basic and acidic residues.

It belongs to the complex I NDUFS4 subunit family. As to quaternary structure, complex I is composed of about 40 different subunits. This is a component of the iron-sulfur (IP) fragment of the enzyme.

It localises to the mitochondrion inner membrane. In terms of biological role, accessory subunit of the mitochondrial membrane respiratory chain NADH dehydrogenase (Complex I), that is believed not to be involved in catalysis. Complex I functions in the transfer of electrons from NADH to the respiratory chain. The immediate electron acceptor for the enzyme is believed to be ubiquinone. In Neurospora crassa (strain ATCC 24698 / 74-OR23-1A / CBS 708.71 / DSM 1257 / FGSC 987), this protein is NADH-ubiquinone oxidoreductase 21 kDa subunit, mitochondrial (nuo-21).